The sequence spans 150 residues: Nucleoside diphosphate kinase (150 aa).

6 residues coordinate ATP: Lys9, Phe57, Arg85, Thr91, Arg102, and Asn112. Catalysis depends on His115, which acts as the Pros-phosphohistidine intermediate.

This sequence belongs to the NDK family. Homotetramer. Mg(2+) is required as a cofactor.

The protein resides in the cytoplasm. The catalysed reaction is a 2'-deoxyribonucleoside 5'-diphosphate + ATP = a 2'-deoxyribonucleoside 5'-triphosphate + ADP. It carries out the reaction a ribonucleoside 5'-diphosphate + ATP = a ribonucleoside 5'-triphosphate + ADP. Functionally, major role in the synthesis of nucleoside triphosphates other than ATP. The ATP gamma phosphate is transferred to the NDP beta phosphate via a ping-pong mechanism, using a phosphorylated active-site intermediate. This chain is Nucleoside diphosphate kinase, found in Thermosynechococcus vestitus (strain NIES-2133 / IAM M-273 / BP-1).